The following is a 254-amino-acid chain: 5-oxoprolinase subunit A (254 aa).

It belongs to the LamB/PxpA family. Forms a complex composed of PxpA, PxpB and PxpC.

The catalysed reaction is 5-oxo-L-proline + ATP + 2 H2O = L-glutamate + ADP + phosphate + H(+). Functionally, catalyzes the cleavage of 5-oxoproline to form L-glutamate coupled to the hydrolysis of ATP to ADP and inorganic phosphate. This Burkholderia lata (strain ATCC 17760 / DSM 23089 / LMG 22485 / NCIMB 9086 / R18194 / 383) protein is 5-oxoprolinase subunit A.